The following is a 325-amino-acid chain: Forkhead box protein B1 (325 aa).

The fork-head DNA-binding region spans 12 to 103 (QKPPYSYISL…GDMFENGSFL (92 aa)). The segment covering 284 to 309 (LSNSPPSLSPTSSQTATSQSSPATPS) has biased composition (low complexity). The interval 284–325 (LSNSPPSLSPTSSQTATSQSSPATPSETLTSPASALHSVAVH) is disordered.

As to expression, expressed widespread in the early developing ventricular zone of the neural tube and later restricted to areas of the spinal cord, hindbrain, thalamus and hypothalamus. Expressed in epithelial cells of developing and adult mammary glands.

It is found in the nucleus. Its function is as follows. Transcription factor expressed by neural progenitor cells in specific regions of the embryonic neuroepithelium. Essential for the mammillary nuclei maintenance. Negatively regulates the proliferation of oligodendrocyte progenitors and promotes oligodendrocyte maturation. Also expressed in mammary glands, plays a role in lactation, controls development of mammary glands and the inferior colliculi of the midbrain in the central nervous system that regulates the milk-ejection reflex. The polypeptide is Forkhead box protein B1 (Foxb1) (Mus musculus (Mouse)).